The following is a 69-amino-acid chain: Large ribosomal subunit protein bL28 (69 aa).

It belongs to the bacterial ribosomal protein bL28 family.

The sequence is that of Large ribosomal subunit protein bL28 from Nitratidesulfovibrio vulgaris (strain ATCC 29579 / DSM 644 / CCUG 34227 / NCIMB 8303 / VKM B-1760 / Hildenborough) (Desulfovibrio vulgaris).